Here is a 536-residue protein sequence, read N- to C-terminus: GPI alpha-1,2-mannosyltransferase 3 (536 aa).

Residue N15 is glycosylated (N-linked (GlcNAc...) asparagine). 2 helical membrane-spanning segments follow: residues 40–60 (IFGINITVFIVLVRLLNCVLV) and 118–138 (VYLLVFVPRVFQALLAAYADV). The N-linked (GlcNAc...) asparagine glycan is linked to N176. A run of 6 helical transmembrane segments spans residues 206–226 (LVSLAVVIRPTALIVWFPLIF), 243–263 (YFPIGVLALGVSTLIDSFFYG), 297–317 (GLPVVIGPHLPLVLHGCLLST), 322–342 (ILLLTIIWTTAVYSLLAHKEF), 344–364 (FIYPVLPFCMIFCGLSLAKLQ), and 369–389 (AAAGALLLFNLCPALYTGLVH). The N-linked (GlcNAc...) asparagine glycan is linked to N467.

Belongs to the glycosyltransferase 22 family. PIGB subfamily.

Its subcellular location is the endoplasmic reticulum membrane. Its pathway is glycolipid biosynthesis; glycosylphosphatidylinositol-anchor biosynthesis. Alpha-1,2-mannosyltransferase that catalyzes the transfer of the third mannose, via an alpha-1,2 bond, from a dolichol-phosphate-mannose (Dol-P-Man) to an alpha-D-Man-(1-&gt;6)-2-PEtn-alpha-D-Man-(1-&gt;4)-alpha-D-GlcN-(1-&gt;6)-(1-radyl,2-acyl-sn-glycero-3-phospho)-2-acyl-inositol intermediate to generate an alpha-D-Man-(1-&gt;2)-alpha-D-Man-(1-&gt;6)-2-PEtn-alpha-D-Man-(1-&gt;4)-alpha-D-GlcN-(1-&gt;6)-(1-radyl,2-acyl-sn-glycero-3-phospho)-2-acyl-inositol (also termed H6) and participates in the nineth step of the glycosylphosphatidylinositol-anchor biosynthesis. May also add the third mannose to an alpha-D-Man-(1-&gt;6)-alpha-D-Man-(1-&gt;4)-alpha-D-GlcN-(1-&gt;6)-(1-radyl,2-acyl-sn-glycero-3-phospho)-2-acyl-inositol (also termed H3) intermediate generating an alpha-D-Man-(1-&gt;2)-alpha-D-Man-(1-&gt;6)-alpha-D-Man-(1-&gt;4)-alpha-D-GlcN-(1-&gt;6)-(1-radyl,2-acyl-sn-glycero-3-phospho)-2-acyl-inositol (also termed H4). The chain is GPI alpha-1,2-mannosyltransferase 3 from Danio rerio (Zebrafish).